Here is a 379-residue protein sequence, read N- to C-terminus: Glucose-1-phosphate adenylyltransferase (379 aa).

Alpha-D-glucose 1-phosphate contacts are provided by residues glycine 164, 179 to 180 (EK), and serine 190.

Belongs to the bacterial/plant glucose-1-phosphate adenylyltransferase family. As to quaternary structure, homotetramer.

It carries out the reaction alpha-D-glucose 1-phosphate + ATP + H(+) = ADP-alpha-D-glucose + diphosphate. Its pathway is glycan biosynthesis; glycogen biosynthesis. Its function is as follows. Involved in the biosynthesis of ADP-glucose, a building block required for the elongation reactions to produce glycogen. Catalyzes the reaction between ATP and alpha-D-glucose 1-phosphate (G1P) to produce pyrophosphate and ADP-Glc. This Streptococcus agalactiae serotype III (strain NEM316) protein is Glucose-1-phosphate adenylyltransferase.